Consider the following 111-residue polypeptide: Large ribosomal subunit protein eL33z (111 aa).

Belongs to the eukaryotic ribosomal protein eL33 family.

This Arabidopsis thaliana (Mouse-ear cress) protein is Large ribosomal subunit protein eL33z (RPL35AB).